The following is a 1024-amino-acid chain: Nardilysin-like (1024 aa).

Residues 41–103 (PDIYPEGSVP…DEVKGKGDHQ (63 aa)) are disordered. Over residues 52-95 (QIDEDDEDGEEEDSDGSSEDDDDDEDDEEDGEGDEEDEDEDEDE) the composition is skewed to acidic residues. H129 is a binding site for Zn(2+). The Proton acceptor role is filled by E132. H133 serves as a coordination point for Zn(2+). E203 is an active-site residue. A Zn(2+)-binding site is contributed by E210.

This sequence belongs to the peptidase M16 family. Zn(2+) is required as a cofactor.

It catalyses the reaction Hydrolysis of polypeptides, preferably at -Xaa-|-Arg-Lys-, and less commonly at -Arg-|-Arg-Xaa-, in which Xaa is not Arg or Lys.. Cleaves peptide substrates on the N-terminus of arginine residues in dibasic pairs. The polypeptide is Nardilysin-like (Arabidopsis thaliana (Mouse-ear cress)).